The sequence spans 232 residues: MLTKRIIPCLDVTAGRVVKGVNFVSLTDVGDPVEIAKAYNEAGADELVFLDITATVELRQTMIDVVERTAEQVFIPLTVGGGISSVSDMKELLQAGADKISLNSAAIKRPDLIQEGADKFGNQCIVVAIDAKWNGTNWSVFTRGGRNDTGLDAITWAKKAVQLGAGEILLTSMDGDGTKNGYDIPLTKAISEAVSVPVIASGGCGNAAHMAEVFEKQTQPPHSPQVFFTTAN.

Catalysis depends on residues aspartate 11 and aspartate 130.

Belongs to the HisA/HisF family. As to quaternary structure, heterodimer of HisH and HisF.

It is found in the cytoplasm. It carries out the reaction 5-[(5-phospho-1-deoxy-D-ribulos-1-ylimino)methylamino]-1-(5-phospho-beta-D-ribosyl)imidazole-4-carboxamide + L-glutamine = D-erythro-1-(imidazol-4-yl)glycerol 3-phosphate + 5-amino-1-(5-phospho-beta-D-ribosyl)imidazole-4-carboxamide + L-glutamate + H(+). It functions in the pathway amino-acid biosynthesis; L-histidine biosynthesis; L-histidine from 5-phospho-alpha-D-ribose 1-diphosphate: step 5/9. IGPS catalyzes the conversion of PRFAR and glutamine to IGP, AICAR and glutamate. The HisF subunit catalyzes the cyclization activity that produces IGP and AICAR from PRFAR using the ammonia provided by the HisH subunit. In Listeria monocytogenes serotype 4a (strain HCC23), this protein is Imidazole glycerol phosphate synthase subunit HisF.